The primary structure comprises 1142 residues: DNA-directed RNA polymerase subunit beta N-terminal section (1142 aa).

The protein belongs to the RNA polymerase beta chain family. As to quaternary structure, in plastids the minimal PEP RNA polymerase catalytic core is composed of four subunits: alpha, beta, beta', and beta''. When a (nuclear-encoded) sigma factor is associated with the core the holoenzyme is formed, which can initiate transcription.

The protein localises to the plastid. The protein resides in the chloroplast. It carries out the reaction RNA(n) + a ribonucleoside 5'-triphosphate = RNA(n+1) + diphosphate. DNA-dependent RNA polymerase catalyzes the transcription of DNA into RNA using the four ribonucleoside triphosphates as substrates. This chain is DNA-directed RNA polymerase subunit beta N-terminal section (rpoB1), found in Pleurastrum terricola (Filamentous green alga).